Reading from the N-terminus, the 125-residue chain is UPF0231 protein in hemN 3'region (125 aa).

The protein belongs to the UPF0231 family.

The polypeptide is UPF0231 protein in hemN 3'region (Mannheimia haemolytica (Pasteurella haemolytica)).